A 431-amino-acid polypeptide reads, in one-letter code: Bone morphogenetic protein 7 (431 aa).

The first 29 residues, 1-29, serve as a signal peptide directing secretion; it reads MHVRSLRAAAPHSFVALWAPLFLLRSALA. Residues 30 to 292 constitute a propeptide that is removed on maturation; the sequence is DFSLDNEVHS…ATEVHFRSIR (263 aa). N187, N302, N321, and N372 each carry an N-linked (GlcNAc...) asparagine glycan. Residues 291 to 311 are disordered; the sequence is IRSTGSKQRSQNRSKTPKNQE. Disulfide bonds link C330–C396, C359–C428, and C363–C430.

The protein belongs to the TGF-beta family. Homodimer; disulfide-linked. Interacts with SOSTDC1. Interacts with TWSG1. Interacts with FBN1 (via N-terminal domain) and FBN2. Interacts with type I receptor ACVR1. Interacts with type II receptor ACVR2A. Interacts with NOG; this interaction inhibits canonical BMP signaling. Interacts with SCUBE3. Interacts with ERFE; the interaction inhibits BMP-induced transcription of HAMP. Interacts with TGFBR3. Several N-termini starting at positions 293, 300, 315 and 316 have been identified by direct sequencing resulting in secretion of different mature forms. As to expression, expressed in the kidney and bladder. Lower levels seen in the brain.

The protein localises to the secreted. Functionally, growth factor of the TGF-beta superfamily that plays important role in various biological processes, including embryogenesis, hematopoiesis, neurogenesis and skeletal morphogenesis. Initiates the canonical BMP signaling cascade by associating with type I receptor ACVR1 and type II receptor ACVR2A. Once all three components are bound together in a complex at the cell surface, ACVR2A phosphorylates and activates ACVR1. In turn, ACVR1 propagates signal by phosphorylating SMAD1/5/8 that travel to the nucleus and act as activators and repressors of transcription of target genes. For specific functions such as growth cone collapse in developing spinal neurons and chemotaxis of monocytes, also uses BMPR2 as type II receptor. Can also signal through non-canonical pathways such as P38 MAP kinase signaling cascade that promotes brown adipocyte differentiation through activation of target genes, including members of the SOX family of transcription factors. Promotes the expression of HAMP, this is repressed by its interaction with ERFE. In Homo sapiens (Human), this protein is Bone morphogenetic protein 7 (BMP7).